The sequence spans 466 residues: Histidine--tRNA ligase (466 aa).

Belongs to the class-II aminoacyl-tRNA synthetase family. Homodimer.

It is found in the cytoplasm. It carries out the reaction tRNA(His) + L-histidine + ATP = L-histidyl-tRNA(His) + AMP + diphosphate + H(+). The chain is Histidine--tRNA ligase from Xylella fastidiosa (strain M12).